The chain runs to 362 residues: GMP reductase (362 aa).

Residues 26–27 (SR), Lys-78, 129–131 (DVA), and 180–181 (IG) contribute to the NADP(+) site. K(+) is bound by residues Gly-181, Gly-183, and Cys-186. Cys-186 serves as the catalytic Thioimidate intermediate. Thr-188 acts as the Proton donor/acceptor in catalysis. Arg-189 provides a ligand contact to K(+). Residues 219–221 (DGG), 242–243 (GG), 268–270 (GMS), and 286–290 (RASEG) contribute to the GMP site. Residues Met-269, 285 to 286 (YR), and 314 to 317 (STCT) each bind NADP(+).

Belongs to the IMPDH/GMPR family.

It carries out the reaction IMP + NH4(+) + NADP(+) = GMP + NADPH + 2 H(+). Its function is as follows. Catalyzes the irreversible NADPH-dependent deamination of GMP to IMP. It functions in the conversion of nucleobase, nucleoside and nucleotide derivatives of G to A nucleotides, and in maintaining the intracellular balance of A and G nucleotides. The protein is GMP reductase of Phytophthora infestans (Potato late blight agent).